A 194-amino-acid polypeptide reads, in one-letter code: Imidazoleglycerol-phosphate dehydratase (194 aa).

It belongs to the imidazoleglycerol-phosphate dehydratase family.

The protein resides in the cytoplasm. It catalyses the reaction D-erythro-1-(imidazol-4-yl)glycerol 3-phosphate = 3-(imidazol-4-yl)-2-oxopropyl phosphate + H2O. Its pathway is amino-acid biosynthesis; L-histidine biosynthesis; L-histidine from 5-phospho-alpha-D-ribose 1-diphosphate: step 6/9. The sequence is that of Imidazoleglycerol-phosphate dehydratase from Limosilactobacillus fermentum (strain NBRC 3956 / LMG 18251) (Lactobacillus fermentum).